Reading from the N-terminus, the 599-residue chain is MFNKFNTKPLWEVSKTLSSVAQGFEPADMVIINSRLINVCTREVIENTDVAISCGRIALVGDAKHCIGESTEVIDAKGQYIAPGFLDGHIHVESSMLSVSEYARSVVPHGTVGIYMDPHEICNVLGLNGVRYMIEDGKGTPLKNMVTTPSCVPAVPGFEDTGAAVGPEDVRETMKWDEIVGLGEMMNFPGILYSTDHAHGVVGETLKASKTVTGHYSLPETGKGLNGYIASGVRCCHESTRAEDALAKMRLGMYAMFREGSAWHDLKEVSKAITENKVDSRFAVLISDDTHPHTLLKDGHLDHIIKRAIEEGIEPLTAIQMVTINCAQCFQMDHELGSITPGKCADIVLIEDLKDVKITKVIIDGNLVAKDGVLTTSIAKYDYPEDAMHSMHIKDKITPASFNIMAQNKEKVTTRVIEIIPERVGTYERHIELNVKDDKVQCDPSKDVLKAVVFERHHETGKAGYGFVKGFGIKRGAMAATVAHDAHNLLVIGTNDEDMALAANTLIECGGGMVAVQDGKVLGLVPLPIAGLMSNKPLEEMAEMVEKLDSAWKEIGCDIVSPFMTMALIPLACLPELRLTNRGLVDCNKFEFVSLFIEE.

It belongs to the metallo-dependent hydrolases superfamily. Adenine deaminase family. The cofactor is Mn(2+).

It carries out the reaction adenine + H2O + H(+) = hypoxanthine + NH4(+). This chain is Adenine deaminase, found in Clostridium botulinum (strain 657 / Type Ba4).